The following is a 221-amino-acid chain: Deoxyribose-phosphate aldolase (221 aa).

The Proton donor/acceptor role is filled by aspartate 96. Lysine 157 functions as the Schiff-base intermediate with acetaldehyde in the catalytic mechanism. Lysine 185 (proton donor/acceptor) is an active-site residue.

It belongs to the DeoC/FbaB aldolase family. DeoC type 1 subfamily.

It is found in the cytoplasm. The catalysed reaction is 2-deoxy-D-ribose 5-phosphate = D-glyceraldehyde 3-phosphate + acetaldehyde. The protein operates within carbohydrate degradation; 2-deoxy-D-ribose 1-phosphate degradation; D-glyceraldehyde 3-phosphate and acetaldehyde from 2-deoxy-alpha-D-ribose 1-phosphate: step 2/2. Functionally, catalyzes a reversible aldol reaction between acetaldehyde and D-glyceraldehyde 3-phosphate to generate 2-deoxy-D-ribose 5-phosphate. The sequence is that of Deoxyribose-phosphate aldolase from Crocosphaera subtropica (strain ATCC 51142 / BH68) (Cyanothece sp. (strain ATCC 51142)).